The primary structure comprises 278 residues: UPF0761 membrane protein CBU_1578 (278 aa).

Helical transmembrane passes span 38–58, 68–88, 92–112, 134–154, 177–197, 207–227, and 244–264; these read LLAL…VPAF, LIWE…LSQL, VTGL…LLMY, FLIY…VMLL, LLFV…NWVL, AVIG…AFTV, and VIPI…LGAV.

It belongs to the UPF0761 family.

The protein resides in the cell inner membrane. The chain is UPF0761 membrane protein CBU_1578 from Coxiella burnetii (strain RSA 493 / Nine Mile phase I).